The following is a 335-amino-acid chain: Twinfilin (335 aa).

2 consecutive ADF-H domains span residues 4–140 and 176–316; these read SSGI…QHKL and GISF…NELH. A disordered region spans residues 307–335; it reads SEESIINELHPPKVEEKKAFSKPSRPGRK. Residues 316 to 325 show a composition bias toward basic and acidic residues; sequence HPPKVEEKKA.

The protein belongs to the actin-binding proteins ADF family. Twinfilin subfamily. In terms of assembly, interacts with G-actin; ADP-actin form.

The protein localises to the cytoplasm. It is found in the cytoskeleton. Its subcellular location is the cell cortex. In terms of biological role, actin-binding protein involved in motile and morphological processes. Inhibits actin polymerization, likely by sequestering G-actin. This Dictyostelium discoideum (Social amoeba) protein is Twinfilin (twfA).